A 290-amino-acid chain; its full sequence is Diaminopimelate epimerase (290 aa).

The substrate site is built by Asn17, Gln49, and Asn69. Cys78 functions as the Proton donor in the catalytic mechanism. Substrate is bound by residues 79-80 (GN), Asn165, Asn198, and 216-217 (ER). Cys225 acts as the Proton acceptor in catalysis. 226–227 (GS) contributes to the substrate binding site.

It belongs to the diaminopimelate epimerase family. In terms of assembly, homodimer.

The protein localises to the cytoplasm. It carries out the reaction (2S,6S)-2,6-diaminopimelate = meso-2,6-diaminopimelate. Its pathway is amino-acid biosynthesis; L-lysine biosynthesis via DAP pathway; DL-2,6-diaminopimelate from LL-2,6-diaminopimelate: step 1/1. Functionally, catalyzes the stereoinversion of LL-2,6-diaminopimelate (L,L-DAP) to meso-diaminopimelate (meso-DAP), a precursor of L-lysine and an essential component of the bacterial peptidoglycan. This chain is Diaminopimelate epimerase, found in Methylocella silvestris (strain DSM 15510 / CIP 108128 / LMG 27833 / NCIMB 13906 / BL2).